A 146-amino-acid polypeptide reads, in one-letter code: Transcriptional regulator MraZ (146 aa).

SpoVT-AbrB domains are found at residues 5–50 (SSFH…TFNE) and 77–120 (ACEC…SREQ).

This sequence belongs to the MraZ family. As to quaternary structure, forms oligomers.

It localises to the cytoplasm. It is found in the nucleoid. This Desulforapulum autotrophicum (strain ATCC 43914 / DSM 3382 / VKM B-1955 / HRM2) (Desulfobacterium autotrophicum) protein is Transcriptional regulator MraZ.